We begin with the raw amino-acid sequence, 493 residues long: Ribose import ATP-binding protein RbsA (493 aa).

2 ABC transporter domains span residues 3 to 239 (IKMK…VGRE) and 252 to 493 (GRVV…TGGR). 35–42 (GENGAGKS) provides a ligand contact to ATP.

This sequence belongs to the ABC transporter superfamily. Ribose importer (TC 3.A.1.2.1) family. As to quaternary structure, the complex is composed of an ATP-binding protein (RbsA), two transmembrane proteins (RbsC) and a solute-binding protein (RbsB).

Its subcellular location is the cell membrane. The enzyme catalyses D-ribose(out) + ATP + H2O = D-ribose(in) + ADP + phosphate + H(+). Part of the ABC transporter complex RbsABC involved in ribose import. Responsible for energy coupling to the transport system. This is Ribose import ATP-binding protein RbsA from Bacillus licheniformis (strain ATCC 14580 / DSM 13 / JCM 2505 / CCUG 7422 / NBRC 12200 / NCIMB 9375 / NCTC 10341 / NRRL NRS-1264 / Gibson 46).